The chain runs to 93 residues: uncharacterized protein (93 aa).

Residues 26–73 are disordered; it reads NRGTIFRPMTRNSGIVGRRGGPVAPAPFRNNVQKPGTRPPGFKPPSGV.

This is an uncharacterized protein from Caenorhabditis elegans.